Here is a 248-residue protein sequence, read N- to C-terminus: ATP synthase subunit a, chloroplastic (248 aa).

5 helical membrane-spanning segments follow: residues 37 to 57 (AQVLITSWIVIAILLSLAVLA), 96 to 116 (VPFIGTMFLFIFVSNWSGALF), 135 to 155 (INTTVALALLTSVAYFYAGLH), 200 to 220 (LVVAVLISLVPLVVPIPMMFL), and 221 to 241 (GLFTSAIQALIFATLAAAYIG).

Belongs to the ATPase A chain family. In terms of assembly, F-type ATPases have 2 components, CF(1) - the catalytic core - and CF(0) - the membrane proton channel. CF(1) has five subunits: alpha(3), beta(3), gamma(1), delta(1), epsilon(1). CF(0) has four main subunits: a, b, b' and c.

It localises to the plastid. Its subcellular location is the chloroplast thylakoid membrane. Its function is as follows. Key component of the proton channel; it plays a direct role in the translocation of protons across the membrane. The polypeptide is ATP synthase subunit a, chloroplastic (Marchantia polymorpha (Common liverwort)).